A 471-amino-acid polypeptide reads, in one-letter code: Putative multidrug resistance protein MdtD (471 aa).

13 consecutive transmembrane segments (helical) span residues 12-32, 49-69, 77-97, 102-124, 138-158, 165-185, 195-215, 220-240, 263-283, 286-306, 329-351, 393-413, and 431-451; these read LWIV…VNTA, MIIV…GWLA, IFFT…QAST, VMAR…LTVM, FVTL…GVLV, WIFL…LCLM, FDLS…LALD, LGIS…ALLL, FSLG…LPFM, VFLQ…MIPM, VLVA…ALAG, LLSM…GLLL, and VFLY…LIFS.

The protein belongs to the major facilitator superfamily. TCR/Tet family.

It localises to the cell inner membrane. The chain is Putative multidrug resistance protein MdtD from Klebsiella pneumoniae subsp. pneumoniae (strain ATCC 700721 / MGH 78578).